The following is a 232-amino-acid chain: Clarin-1 (232 aa).

Residues 8-28 form a helical membrane-spanning segment; the sequence is IIFCMAGVFSFACALGVVTAL. The N-linked (GlcNAc...) asparagine glycan is linked to asparagine 48. 3 helical membrane-spanning segments follow: residues 101–121, 135–155, and 186–206; these read VILF…FFMY, LGLY…MILF, and TTSF…GLLI.

This sequence belongs to the clarin family. In terms of tissue distribution, widely expressed. Found in the retina.

It is found in the cell membrane. May have a role in the excitatory ribbon synapse junctions between hair cells and cochlear ganglion cells and presumably also in analogous synapses within the retina. In Homo sapiens (Human), this protein is Clarin-1 (CLRN1).